Consider the following 55-residue polypeptide: ATP synthase F(0) complex subunit 8 (55 aa).

Residues 7–24 (APWFSIMIMTWLTLALLI) form a helical membrane-spanning segment. The disordered stretch occupies residues 34–55 (TNPPSSKPSLTTKPTPWAWPWT).

It belongs to the ATPase protein 8 family. Component of the ATP synthase complex composed at least of ATP5F1A/subunit alpha, ATP5F1B/subunit beta, ATP5MC1/subunit c (homooctomer), MT-ATP6/subunit a, MT-ATP8/subunit 8, ATP5ME/subunit e, ATP5MF/subunit f, ATP5MG/subunit g, ATP5MK/subunit k, ATP5MJ/subunit j, ATP5F1C/subunit gamma, ATP5F1D/subunit delta, ATP5F1E/subunit epsilon, ATP5PF/subunit F6, ATP5PB/subunit b, ATP5PD/subunit d, ATP5PO/subunit OSCP. ATP synthase complex consists of a soluble F(1) head domain (subunits alpha(3) and beta(3)) - the catalytic core - and a membrane F(0) domain - the membrane proton channel (subunits c, a, 8, e, f, g, k and j). These two domains are linked by a central stalk (subunits gamma, delta, and epsilon) rotating inside the F1 region and a stationary peripheral stalk (subunits F6, b, d, and OSCP).

It is found in the mitochondrion membrane. Functionally, subunit 8, of the mitochondrial membrane ATP synthase complex (F(1)F(0) ATP synthase or Complex V) that produces ATP from ADP in the presence of a proton gradient across the membrane which is generated by electron transport complexes of the respiratory chain. ATP synthase complex consist of a soluble F(1) head domain - the catalytic core - and a membrane F(1) domain - the membrane proton channel. These two domains are linked by a central stalk rotating inside the F(1) region and a stationary peripheral stalk. During catalysis, ATP synthesis in the catalytic domain of F(1) is coupled via a rotary mechanism of the central stalk subunits to proton translocation. In vivo, can only synthesize ATP although its ATP hydrolase activity can be activated artificially in vitro. Part of the complex F(0) domain. This Aythya americana (Redhead) protein is ATP synthase F(0) complex subunit 8.